Consider the following 221-residue polypeptide: Kynurenine formamidase (221 aa).

Substrate is bound at residue Phe30. Residues His60, His64, and Asp66 each contribute to the Zn(2+) site. His70 functions as the Proton donor/acceptor in the catalytic mechanism. Zn(2+) contacts are provided by His172 and Glu184.

It belongs to the Cyclase 1 superfamily. KynB family. As to quaternary structure, homodimer. Requires Zn(2+) as cofactor.

It catalyses the reaction N-formyl-L-kynurenine + H2O = L-kynurenine + formate + H(+). It participates in amino-acid degradation; L-tryptophan degradation via kynurenine pathway; L-kynurenine from L-tryptophan: step 2/2. Catalyzes the hydrolysis of N-formyl-L-kynurenine to L-kynurenine, the second step in the kynurenine pathway of tryptophan degradation. In Polaromonas sp. (strain JS666 / ATCC BAA-500), this protein is Kynurenine formamidase.